We begin with the raw amino-acid sequence, 408 residues long: Substance-P receptor (408 aa).

Residues 1–32 (MNSNISAQNDSALNSTIQNGTKINQFIQPPWQ) lie on the Extracellular side of the membrane. Residues Asn4, Asn9, Asn14, and Asn19 are each glycosylated (N-linked (GlcNAc...) asparagine). Residues 33–55 (IALWSVAYSIIVIVSLVGNIIVM) form a helical membrane-spanning segment. Topologically, residues 56–65 (WIIIAHKRMR) are cytoplasmic. The chain crosses the membrane as a helical span at residues 66-87 (TVTNYFLVNLAFAEASMSAFNT). Residues 88 to 107 (VINFTYAIHNHWYYGLIYCK) lie on the Extracellular side of the membrane. A disulfide bridge connects residues Cys106 and Cys181. The helical transmembrane segment at 108–129 (FHNFFPISAVFTSIYSMTAIAL) threads the bilayer. Residues 130-149 (DRYMAIIHPLKPRLSATATK) are Cytoplasmic-facing. Residues 150 to 170 (IVICVIWSFSFCMAFPLGYYA) form a helical membrane-spanning segment. The Extracellular portion of the chain corresponds to 171–196 (DVYPMEGGDICYLNWPDSEENRKYEQ). Residues 197-221 (VYQVLVFCLIYILPLLVIGCAYTFI) traverse the membrane as a helical segment. The Cytoplasmic portion of the chain corresponds to 222 to 250 (GMTLWASEIPGDSSDRYHEQVVAKRKVVK). Residues 251–272 (MMIVVVCTFAICWLPFHIFFLL) form a helical membrane-spanning segment. Topologically, residues 273 to 283 (QTLHEMTQKFY) are extracellular. Residues 284 to 308 (QQFYLAIMWLAMSSTMYNPIIYCCL) traverse the membrane as a helical segment. At 309–408 (NDRFRIGFKH…SSSFYSNNLA (100 aa)) the chain is on the cytoplasmic side. Residue Cys323 is the site of S-palmitoyl cysteine attachment. The segment at 366–408 (DEEAEENGKSSKRLSLDLTSNGSSRSVCKTMSDSSSFYSNNLA) is disordered. Residues 382-408 (DLTSNGSSRSVCKTMSDSSSFYSNNLA) are compositionally biased toward polar residues.

It belongs to the G-protein coupled receptor 1 family.

It is found in the cell membrane. Its function is as follows. This is a receptor for the tachykinin neuropeptide substance P. It is probably associated with G proteins that activate a phosphatidylinositol-calcium second messenger system. In Aquarana catesbeiana (American bullfrog), this protein is Substance-P receptor (TACR1).